The sequence spans 405 residues: Argininosuccinate synthase (405 aa).

Residues 10-18 (AYSGGLDTS) and Ala37 each bind ATP. L-citrulline-binding residues include Tyr88 and Ser93. An ATP-binding site is contributed by Gly118. L-aspartate contacts are provided by Thr120, Asn124, and Asp125. Asn124 lines the L-citrulline pocket. Arg128, Ser177, Ser186, Glu263, and Tyr275 together coordinate L-citrulline.

This sequence belongs to the argininosuccinate synthase family. Type 1 subfamily. In terms of assembly, homotetramer.

Its subcellular location is the cytoplasm. The catalysed reaction is L-citrulline + L-aspartate + ATP = 2-(N(omega)-L-arginino)succinate + AMP + diphosphate + H(+). The protein operates within amino-acid biosynthesis; L-arginine biosynthesis; L-arginine from L-ornithine and carbamoyl phosphate: step 2/3. The chain is Argininosuccinate synthase from Acetivibrio thermocellus (strain ATCC 27405 / DSM 1237 / JCM 9322 / NBRC 103400 / NCIMB 10682 / NRRL B-4536 / VPI 7372) (Clostridium thermocellum).